The sequence spans 1476 residues: Membrane-associated guanylate kinase, WW and PDZ domain-containing protein 3 (1476 aa).

The region spanning 18–108 is the PDZ 1 domain; it reads CAVSWAGPPG…PIRLKTVKPG (91 aa). An interaction with ADRB1 and TGFA region spans residues 18 to 108; it reads CAVSWAGPPG…PIRLKTVKPG (91 aa). Residues 116–290 form the Guanylate kinase-like domain; sequence RHYLSLQFQK…SSMDFRNYMM (175 aa). Residue 123 to 130 participates in ATP binding; sequence FQKGSIDH. The disordered stretch occupies residues 184–266; the sequence is TYDGNFYGTP…ETREMHSETS (83 aa). The span at 193–204 shows a compositional bias: pro residues; it reads PKPPAEPSPFQP. Ser-236 is modified (phosphoserine). Residues 238 to 247 show a composition bias toward acidic residues; the sequence is LPEEEEDEDK. WW domains lie at 296–329 and 342–375; these read EPLP…DPRL and GELP…NPVE. Residues 413–495 enclose the PDZ 2 domain; sequence RASLKKSTMG…NQYVNLTLCR (83 aa). Residues 413-495 form an interaction with PTEN region; that stretch reads RASLKKSTMG…NQYVNLTLCR (83 aa). The segment at 551–575 is disordered; that stretch reads LASDRLNGPSESSEQRASLASSGSS. Over residues 559–575 the composition is skewed to polar residues; the sequence is PSESSEQRASLASSGSS. The PDZ 3 domain maps to 581 to 657; that stretch reads TIPLIKGPKG…GADVPLLILR (77 aa). Phosphoserine is present on Ser-598. A disordered region spans residues 664-691; sequence TKTAKTKTDTKENSGSLETINEPIPQPM. The residue at position 702 (Ser-702) is a Phosphoserine. The PDZ 4 domain maps to 729–811; sequence DVFLRKQESG…NGHVLLTVRR (83 aa). Residues 729 to 811 are interaction with ADGRB1; the sequence is DVFLRKQESG…NGHVLLTVRR (83 aa). The tract at residues 818-844 is disordered; sequence KQPEDESHQAFSQNGSPRLNRAELPTR. 2 positions are modified to phosphoserine: Ser-833 and Ser-916. A PDZ 5 domain is found at 852-939; the sequence is DVTLQRKENE…TVTLTVVAEE (88 aa). The interaction with LPAR2 and GRIN2B stretch occupies residues 852-939; the sequence is DVTLQRKENE…TVTLTVVAEE (88 aa). Positions 939–966 are disordered; sequence EEHHGPPSGTNSARQSPALQHRPMGQAQ. Residues 946–956 are compositionally biased toward polar residues; the sequence is SGTNSARQSPA. In terms of domain architecture, PDZ 6 spans 1022–1104; that stretch reads PVELERGPRG…KVLLLLRPGT (83 aa). 2 disordered regions span residues 1109-1151 and 1168-1476; these read DHGD…ATED and TVQE…DKQL. A compositionally biased stretch (polar residues) spans 1114–1123; the sequence is DTNSPSSSNV. Basic and acidic residues-rich tracts occupy residues 1193–1211 and 1230–1265; these read SKKD…RLKG and RHSE…ESKG. Over residues 1285–1304 the composition is skewed to polar residues; it reads SSSPKKQQKIGGNSLSNTEG. Basic and acidic residues-rich tracts occupy residues 1317 to 1340 and 1350 to 1361; these read HPRD…KDLK and KSPEKKSSKVDE. Ser-1321 bears the Phosphoserine mark. Residues 1363 to 1373 are compositionally biased toward polar residues; the sequence is SLPSKKTSSTA. The segment covering 1419–1437 has biased composition (basic and acidic residues); the sequence is ADDHKGRESEVTDRCRERA.

The protein belongs to the MAGUK family. As to quaternary structure, interacts with ADRB1, ADGRB1, LPAR2/EDG4, GRIN2B, PTEN, and PTPRB. Interacts with unidentified tyrosine phosphorylated proteins. Interacts with FZD4, FZD7, TGFA and VANGL2. Interacts with DLL1. Interacts with PRRG4 (via cytoplasmic domain). In terms of tissue distribution, widely expressed. Colocalizes with TGFA in neurons in the cortex and dentate gyrus, as well as in ependymal cells and some astrocytes (at protein level). Present in lens epithelium.

Its subcellular location is the cell membrane. It localises to the cell junction. The protein resides in the tight junction. It is found in the nucleus. Acts as a scaffolding protein at cell-cell junctions, thereby regulating various cellular and signaling processes. Cooperates with PTEN to modulate the kinase activity of AKT1. Its interaction with PTPRB and tyrosine phosphorylated proteins suggests that it may link receptor tyrosine phosphatase with its substrates at the plasma membrane. In polarized epithelial cells, involved in efficient trafficking of TGFA to the cell surface. Regulates the ability of LPAR2 to activate ERK and RhoA pathways. Regulates the JNK signaling cascade via its interaction with FZD4 and VANGL2. The sequence is that of Membrane-associated guanylate kinase, WW and PDZ domain-containing protein 3 (Magi3) from Mus musculus (Mouse).